Reading from the N-terminus, the 157-residue chain is MKKKANRLDAIKMIISSKEVGSQEELLQELGQEGFELTQATLSRDLKQLKVAKAASMNGKYVYVLPNDIMYKRVGDQSASEMLMNNGFISLQFSGNIAVIKTRPGYASSMAYDIDNRESDTILGTIAGDDTIMLVLREGATPTAVRHFLSLIIPNIN.

The protein belongs to the ArgR family.

Its subcellular location is the cytoplasm. The protein operates within amino-acid biosynthesis; L-arginine biosynthesis [regulation]. Its function is as follows. Regulates arginine biosynthesis genes. In Bacteroides fragilis (strain YCH46), this protein is Arginine repressor.